The following is a 453-amino-acid chain: UDP-N-acetylmuramoylalanine--D-glutamate ligase (453 aa).

Gly-120 to Thr-126 serves as a coordination point for ATP.

This sequence belongs to the MurCDEF family.

The protein resides in the cytoplasm. It catalyses the reaction UDP-N-acetyl-alpha-D-muramoyl-L-alanine + D-glutamate + ATP = UDP-N-acetyl-alpha-D-muramoyl-L-alanyl-D-glutamate + ADP + phosphate + H(+). Its pathway is cell wall biogenesis; peptidoglycan biosynthesis. Cell wall formation. Catalyzes the addition of glutamate to the nucleotide precursor UDP-N-acetylmuramoyl-L-alanine (UMA). This chain is UDP-N-acetylmuramoylalanine--D-glutamate ligase, found in Nitrosococcus oceani (strain ATCC 19707 / BCRC 17464 / JCM 30415 / NCIMB 11848 / C-107).